Here is a 79-residue protein sequence, read N- to C-terminus: Cytochrome c oxidase assembly factor 6 homolog (79 aa).

Residues 9-52 (RQACWGARDEYWKCLDENTEDASKCKKLRSSFESSCPQQWIKYF) enclose the CHCH domain. The short motif at 12-22 (CWGARDEYWKC) is the Cx9C motif element. 2 disulfides stabilise this stretch: cysteine 12/cysteine 44 and cysteine 22/cysteine 33. The short motif at 33-44 (CKKLRSSFESSC) is the Cx10C motif element.

The protein belongs to the cytochrome c oxidase subunit 6B family. Found in a complex with TMEM177, COX20, MT-CO2/COX2, COX18, SCO1 and SCO2. Interacts with COA1, MT-CO2/COX2, SCO1, SCO2 and COX20. Interacts with COX20 in a MT-CO2/COX2- and COX18-dependent manner. Interacts with COX16.

It localises to the mitochondrion intermembrane space. Involved in the maturation of the mitochondrial respiratory chain complex IV subunit MT-CO2/COX2. Thereby, may regulate early steps of complex IV assembly. Mitochondrial respiratory chain complex IV or cytochrome c oxidase is the component of the respiratory chain that catalyzes the transfer of electrons from intermembrane space cytochrome c to molecular oxygen in the matrix and as a consequence contributes to the proton gradient involved in mitochondrial ATP synthesis. May also be required for efficient formation of respiratory supercomplexes comprised of complexes III and IV. This is Cytochrome c oxidase assembly factor 6 homolog (COA6) from Bos taurus (Bovine).